We begin with the raw amino-acid sequence, 117 residues long: UPF0102 protein Swoo_0351 (117 aa).

This sequence belongs to the UPF0102 family.

The sequence is that of UPF0102 protein Swoo_0351 from Shewanella woodyi (strain ATCC 51908 / MS32).